The chain runs to 283 residues: Elongation factor Ts (283 aa).

Positions T80–V83 are involved in Mg(2+) ion dislocation from EF-Tu.

This sequence belongs to the EF-Ts family.

Its subcellular location is the cytoplasm. Its function is as follows. Associates with the EF-Tu.GDP complex and induces the exchange of GDP to GTP. It remains bound to the aminoacyl-tRNA.EF-Tu.GTP complex up to the GTP hydrolysis stage on the ribosome. The sequence is that of Elongation factor Ts from Pectobacterium atrosepticum (strain SCRI 1043 / ATCC BAA-672) (Erwinia carotovora subsp. atroseptica).